Here is a 197-residue protein sequence, read N- to C-terminus: dITP/XTP pyrophosphatase (197 aa).

8–13 (TKNKGK) provides a ligand contact to substrate. Residues glutamate 42 and aspartate 71 each coordinate Mg(2+). Residue aspartate 71 is the Proton acceptor of the active site. Residues serine 72, 154-157 (FGYD), lysine 177, and 182-183 (HR) each bind substrate.

This sequence belongs to the HAM1 NTPase family. In terms of assembly, homodimer. It depends on Mg(2+) as a cofactor.

The enzyme catalyses XTP + H2O = XMP + diphosphate + H(+). It catalyses the reaction dITP + H2O = dIMP + diphosphate + H(+). It carries out the reaction ITP + H2O = IMP + diphosphate + H(+). Its function is as follows. Pyrophosphatase that catalyzes the hydrolysis of nucleoside triphosphates to their monophosphate derivatives, with a high preference for the non-canonical purine nucleotides XTP (xanthosine triphosphate), dITP (deoxyinosine triphosphate) and ITP. Seems to function as a house-cleaning enzyme that removes non-canonical purine nucleotides from the nucleotide pool, thus preventing their incorporation into DNA/RNA and avoiding chromosomal lesions. The polypeptide is dITP/XTP pyrophosphatase (Oceanobacillus iheyensis (strain DSM 14371 / CIP 107618 / JCM 11309 / KCTC 3954 / HTE831)).